Reading from the N-terminus, the 244-residue chain is 5-oxoprolinase subunit A (244 aa).

This sequence belongs to the LamB/PxpA family. As to quaternary structure, forms a complex composed of PxpA, PxpB and PxpC.

The enzyme catalyses 5-oxo-L-proline + ATP + 2 H2O = L-glutamate + ADP + phosphate + H(+). Its function is as follows. Catalyzes the cleavage of 5-oxoproline to form L-glutamate coupled to the hydrolysis of ATP to ADP and inorganic phosphate. The chain is 5-oxoprolinase subunit A from Escherichia fergusonii (strain ATCC 35469 / DSM 13698 / CCUG 18766 / IAM 14443 / JCM 21226 / LMG 7866 / NBRC 102419 / NCTC 12128 / CDC 0568-73).